The primary structure comprises 472 residues: Tryptophanase (472 aa).

Residue K270 is modified to N6-(pyridoxal phosphate)lysine.

It belongs to the beta-eliminating lyase family. In terms of assembly, homotetramer. It depends on pyridoxal 5'-phosphate as a cofactor.

It carries out the reaction L-tryptophan + H2O = indole + pyruvate + NH4(+). It functions in the pathway amino-acid degradation; L-tryptophan degradation via pyruvate pathway; indole and pyruvate from L-tryptophan: step 1/1. The protein is Tryptophanase (tnaA) of Vibrio cholerae serotype O1 (strain ATCC 39315 / El Tor Inaba N16961).